A 125-amino-acid chain; its full sequence is Small ribosomal subunit protein uS13 (125 aa).

Belongs to the universal ribosomal protein uS13 family. As to quaternary structure, part of the 30S ribosomal subunit. Forms a loose heterodimer with protein S19. Forms two bridges to the 50S subunit in the 70S ribosome.

Located at the top of the head of the 30S subunit, it contacts several helices of the 16S rRNA. In the 70S ribosome it contacts the 23S rRNA (bridge B1a) and protein L5 of the 50S subunit (bridge B1b), connecting the 2 subunits; these bridges are implicated in subunit movement. Contacts the tRNAs in the A and P-sites. This is Small ribosomal subunit protein uS13 from Rickettsia rickettsii (strain Iowa).